Here is a 382-residue protein sequence, read N- to C-terminus: Galactokinase (382 aa).

34 to 37 (EHTD) is a binding site for substrate. 124 to 130 (GAGLSSS) contacts ATP. Positions 130 and 162 each coordinate Mg(2+). Catalysis depends on D174, which acts as the Proton acceptor. Y223 is a substrate binding site.

It belongs to the GHMP kinase family. GalK subfamily.

Its subcellular location is the cytoplasm. It carries out the reaction alpha-D-galactose + ATP = alpha-D-galactose 1-phosphate + ADP + H(+). The protein operates within carbohydrate metabolism; galactose metabolism. In terms of biological role, catalyzes the transfer of the gamma-phosphate of ATP to D-galactose to form alpha-D-galactose-1-phosphate (Gal-1-P). The chain is Galactokinase from Salmonella schwarzengrund (strain CVM19633).